The chain runs to 72 residues: Translation initiation factor IF-1 (72 aa).

In terms of domain architecture, S1-like spans 1 to 72 (MAKEESIEVE…SKGRITYRYK (72 aa)).

The protein belongs to the IF-1 family. Component of the 30S ribosomal translation pre-initiation complex which assembles on the 30S ribosome in the order IF-2 and IF-3, IF-1 and N-formylmethionyl-tRNA(fMet); mRNA recruitment can occur at any time during PIC assembly.

Its subcellular location is the cytoplasm. Functionally, one of the essential components for the initiation of protein synthesis. Stabilizes the binding of IF-2 and IF-3 on the 30S subunit to which N-formylmethionyl-tRNA(fMet) subsequently binds. Helps modulate mRNA selection, yielding the 30S pre-initiation complex (PIC). Upon addition of the 50S ribosomal subunit IF-1, IF-2 and IF-3 are released leaving the mature 70S translation initiation complex. In Chlorobaculum tepidum (strain ATCC 49652 / DSM 12025 / NBRC 103806 / TLS) (Chlorobium tepidum), this protein is Translation initiation factor IF-1.